The primary structure comprises 372 residues: Molybdopterin synthase catalytic subunit (372 aa).

Residues 101 to 102 (HR), K117, and 124 to 126 (KKE) each bind substrate.

It belongs to the MoaE family. MOCS2B subfamily. As to quaternary structure, heterotetramer; composed of 2 small (Mocs2A) and 2 large (Mocs2B) subunits.

The protein localises to the cytoplasm. The enzyme catalyses 2 [molybdopterin-synthase sulfur-carrier protein]-C-terminal-Gly-aminoethanethioate + cyclic pyranopterin phosphate + H2O = molybdopterin + 2 [molybdopterin-synthase sulfur-carrier protein]-C-terminal Gly-Gly + 2 H(+). Its pathway is cofactor biosynthesis; molybdopterin biosynthesis. Its function is as follows. Catalytic subunit of the molybdopterin synthase complex, a complex that catalyzes the conversion of precursor Z into molybdopterin. Acts by mediating the incorporation of 2 sulfur atoms from thiocarboxylated Mocs2A into precursor Z to generate a dithiolene group. The protein is Molybdopterin synthase catalytic subunit of Drosophila willistoni (Fruit fly).